The sequence spans 186 residues: MSQVYSVAVVVGSLRKESYNRKVARALSELAPSSLALKIVEIGDLPLYNEDVEAEAPPEAWKRFREEIRRSDAVLFVTPEHNRSVPGCLKNAIDVGSRPYGQSAWSGKPTAVVSVSPGAIGGFGANHAVRQSLVFLDMPCMQMPEAYIGGAASLFDDSGKLNDKTRPFLQAFVDKFASWVKLNRAV.

FMN-binding positions include 13-20, 80-83, and S116; these read SLRKESYN and EHNR.

It belongs to the SsuE family. Homotetramer. Dimer of dimers. The tetrameric configuration has a central role in chromate reductase activity. FMN is required as a cofactor.

The catalysed reaction is a quinone + NADH + H(+) = a quinol + NAD(+). It carries out the reaction a quinone + NADPH + H(+) = a quinol + NADP(+). The enzyme catalyses Cr(6+) + 2 NADH + O2 = Cr(3+) + superoxide + 2 NAD(+) + 2 H(+). It catalyses the reaction Cr(6+) + 2 NADPH + O2 = Cr(3+) + superoxide + 2 NADP(+) + 2 H(+). Its activity is regulated as follows. Non-competitively inhibited by sulfate. Catalyzes the reduction of quinones. Acts by simultaneous two-electron transfer, avoiding formation of highly reactive semiquinone intermediates and producing quinols that promote tolerance of H(2)O(2). Quinone reduction is probably the primary biological role of ChrR. Can also reduce toxic chromate to insoluble and less toxic Cr(3+). Catalyzes the transfer of three electrons to Cr(6+) producing Cr(3+) and one electron to molecular oxygen. This reaction produces transiently a minimal amount of the toxic Cr(5+) species and reactive oxygen species (ROS). Chromate reduction protects the cell against chromate toxicity, but is likely a secondary activity. In Pseudomonas putida (Arthrobacter siderocapsulatus), this protein is Quinone reductase (chrR).